The primary structure comprises 258 residues: 5'-nucleotidase SurE (258 aa).

Residues Asp-16, Asp-17, Ser-47, and Asn-99 each contribute to the a divalent metal cation site.

Belongs to the SurE nucleotidase family. The cofactor is a divalent metal cation.

The protein localises to the cytoplasm. It catalyses the reaction a ribonucleoside 5'-phosphate + H2O = a ribonucleoside + phosphate. Its function is as follows. Nucleotidase that shows phosphatase activity on nucleoside 5'-monophosphates. This Coxiella burnetii (strain CbuK_Q154) (Coxiella burnetii (strain Q154)) protein is 5'-nucleotidase SurE.